A 300-amino-acid chain; its full sequence is uncharacterized protein (300 aa).

Residues 1–7 (MGSTRKG) are Periplasmic-facing. Residues 8-28 (MLNVLIAAVLWGSSGVCAQYI) traverse the membrane as a helical segment. Positions 16-145 (VLWGSSGVCA…SLIGTFLLVT (130 aa)) constitute an EamA 1 domain. Residues 29–45 (MEQSRMSSQFLTMIRLL) lie on the Cytoplasmic side of the membrane. The helical transmembrane segment at 46–66 (FAGLILVTFSFMHGDKIFSIL) threads the bilayer. The Periplasmic portion of the chain corresponds to 67 to 71 (KNRKD). Residues 72 to 92 (ALSLLIFSVVGALTVQLTFLL) form a helical membrane-spanning segment. The Cytoplasmic segment spans residues 93–99 (TIEKSNA). Residues 100-120 (ATATVLQFLSPTIIVAWFALA) traverse the membrane as a helical segment. At 121–124 (RRTR) the chain is on the periplasmic side. A helical membrane pass occupies residues 125–145 (PGILVLTAILTSLIGTFLLVT). Topologically, residues 146 to 151 (HGNPTS) are cytoplasmic. The helical transmembrane segment at 152–172 (LSISSAALFWGIASAFAAAFY) threads the bilayer. An EamA 2 domain is found at 167-291 (FAAAFYTTWP…ILSSVILISL (125 aa)). Residues 173–184 (TTWPSRLIAQYG) are Periplasmic-facing. Residues 185–205 (TLPVVGWSMSFGGLILLPFYA) form a helical membrane-spanning segment. Topologically, residues 206–216 (KEGTHFAVSGS) are cytoplasmic. A helical transmembrane segment spans residues 217–237 (LILAFFYLVVIGTSLTFSLYL). Topologically, residues 238-263 (KGAQLIGGPKASILSCAEPLSSALLS) are periplasmic. A helical transmembrane segment spans residues 264-284 (LLLLGISFTLPDWLGTLLILS). The Cytoplasmic segment spans residues 285-300 (SVILISLDSRRRARAA).

It belongs to the EamA transporter family.

The protein localises to the cell inner membrane. This is an uncharacterized protein from Salmonella typhimurium (strain LT2 / SGSC1412 / ATCC 700720).